Consider the following 96-residue polypeptide: Co-chaperonin GroES (96 aa).

Belongs to the GroES chaperonin family. As to quaternary structure, heptamer of 7 subunits arranged in a ring. Interacts with the chaperonin GroEL.

Its subcellular location is the cytoplasm. Together with the chaperonin GroEL, plays an essential role in assisting protein folding. The GroEL-GroES system forms a nano-cage that allows encapsulation of the non-native substrate proteins and provides a physical environment optimized to promote and accelerate protein folding. GroES binds to the apical surface of the GroEL ring, thereby capping the opening of the GroEL channel. This Citrifermentans bemidjiense (strain ATCC BAA-1014 / DSM 16622 / JCM 12645 / Bem) (Geobacter bemidjiensis) protein is Co-chaperonin GroES.